Reading from the N-terminus, the 369-residue chain is 4beta-methylsterol monooxygenase (369 aa).

One can recognise a Rieske domain in the interval 29–135 (WYVVEIDGRL…VKAQWGLIWL (107 aa)). [2Fe-2S] cluster-binding residues include Cys-70, His-72, Cys-89, and His-92.

[2Fe-2S] cluster serves as cofactor.

The catalysed reaction is a 3beta-hydroxy-4,4-dimethylsteroid + 3 NADH + 3 O2 + 2 H(+) = a 3beta-hydroxy-4alpha-methylsteroid-4beta-carboxylate + 3 NAD(+) + 4 H2O. The enzyme catalyses 4,4-dimethyl-5alpha-cholesta-8,24-dien-3beta-ol + 3 NADH + 3 O2 + 2 H(+) = 4beta-carboxy-4alpha-methyl-5alpha-cholesta-8,24-dien-3beta-ol + 3 NAD(+) + 4 H2O. It catalyses the reaction a 3beta-hydroxy-4,4-dimethylsteroid + NADH + O2 + H(+) = a 3beta-hydroxy-4beta-hydroxymethyl-4alpha-methylsteroid + NAD(+) + H2O. It carries out the reaction a 3beta-hydroxy-4beta-hydroxymethyl-4alpha-methylsteroid + NADH + O2 + H(+) = a 3beta-hydroxy-4beta-formyl-4alpha-methylsteroid + NAD(+) + 2 H2O. The catalysed reaction is a 3beta-hydroxy-4beta-formyl-4alpha-methylsteroid + NADH + O2 = a 3beta-hydroxy-4alpha-methylsteroid-4beta-carboxylate + NAD(+) + H2O. The enzyme catalyses 4,4-dimethyl-5alpha-cholesta-8,24-dien-3beta-ol + NADH + O2 + H(+) = 4beta-hydroxymethyl-4alpha-methylzymosterol + NAD(+) + H2O. It catalyses the reaction 4beta-hydroxymethyl-4alpha-methylzymosterol + NADH + O2 + H(+) = 4beta-formylmethyl-4alpha-methyl-5alpha-cholesta-8,24-dien-3beta-ol + NAD(+) + 2 H2O. It carries out the reaction 4beta-formylmethyl-4alpha-methyl-5alpha-cholesta-8,24-dien-3beta-ol + NADH + O2 = 4beta-carboxy-4alpha-methyl-5alpha-cholesta-8,24-dien-3beta-ol + NAD(+) + H2O. It functions in the pathway steroid biosynthesis; sterol biosynthesis. Its function is as follows. Participates in the biosynthesis of bacterial sterols. Together with SdmB, removes one methyl group from the C-4 position of 4,4-dimethylated steroid molecules. SdmA oxidizes the sterol 4beta-methyl group into first a hydroxyl, then an aldehyde and finally a carboxylic acid group. This Methylococcus capsulatus (strain ATCC 33009 / NCIMB 11132 / Bath) protein is 4beta-methylsterol monooxygenase.